The primary structure comprises 252 residues: Enolase-phosphatase E1 (252 aa).

Mg(2+) contacts are provided by Asp14 and Glu16. Residues 142-143 (SS) and Lys176 contribute to the substrate site. Asp201 is a binding site for Mg(2+).

Belongs to the HAD-like hydrolase superfamily. MasA/MtnC family. As to quaternary structure, monomer. Mg(2+) is required as a cofactor.

It localises to the cytoplasm. The protein resides in the nucleus. The enzyme catalyses 5-methylsulfanyl-2,3-dioxopentyl phosphate + H2O = 1,2-dihydroxy-5-(methylsulfanyl)pent-1-en-3-one + phosphate. It participates in amino-acid biosynthesis; L-methionine biosynthesis via salvage pathway; L-methionine from S-methyl-5-thio-alpha-D-ribose 1-phosphate: step 3/6. Its pathway is amino-acid biosynthesis; L-methionine biosynthesis via salvage pathway; L-methionine from S-methyl-5-thio-alpha-D-ribose 1-phosphate: step 4/6. Bifunctional enzyme that catalyzes the enolization of 2,3-diketo-5-methylthiopentyl-1-phosphate (DK-MTP-1-P) into the intermediate 2-hydroxy-3-keto-5-methylthiopentenyl-1-phosphate (HK-MTPenyl-1-P), which is then dephosphorylated to form the acireductone 1,2-dihydroxy-3-keto-5-methylthiopentene (DHK-MTPene). The sequence is that of Enolase-phosphatase E1 from Drosophila ananassae (Fruit fly).